The primary structure comprises 177 residues: Large ribosomal subunit protein uL6 (177 aa).

This sequence belongs to the universal ribosomal protein uL6 family. In terms of assembly, part of the 50S ribosomal subunit.

In terms of biological role, this protein binds to the 23S rRNA, and is important in its secondary structure. It is located near the subunit interface in the base of the L7/L12 stalk, and near the tRNA binding site of the peptidyltransferase center. The polypeptide is Large ribosomal subunit protein uL6 (Brucella anthropi (strain ATCC 49188 / DSM 6882 / CCUG 24695 / JCM 21032 / LMG 3331 / NBRC 15819 / NCTC 12168 / Alc 37) (Ochrobactrum anthropi)).